A 412-amino-acid chain; its full sequence is 43 kDa receptor-associated protein of the synapse (412 aa).

Gly-2 carries N-myristoyl glycine lipidation. 7 TPR repeats span residues 6–39 (TKQQIEKGLQLYQSNQTEKALQVWTKVLEKSSDL), 83–116 (LESYLNLARSNEKLCEFHKTISYCKTCLGLPGTR), 123–156 (GQVSLSMGNAFLGLSVFQKALESFEKALRYAHNN), 163–196 (CRVCCSLGSFYAQVKDYEKALFFPCKAAELVNNY), 206–239 (AMSQYHMAVAYRLLGRLGSAMECCEESMKIALQH), 246–279 (ALCLLCFADIHRSRGDLETAFPRYDSAMSIMTEI), and 286–319 (VQALLGVAKCWVARKALDKALDAIERAQDLAEEV). Position 196 is a phosphotyrosine (Tyr-196). The RING-type zinc-finger motif lies at 363–403 (CGLCGESIGEKNSRLQALPCSHIFHLRCLQNNGTRSCPNCR). At Ser-405 the chain carries Phosphoserine.

It belongs to the RAPsyn family. In terms of processing, ubiquitinated by the BCR(KLHL8) complex, leading to its degradation.

It is found in the cell membrane. Its subcellular location is the postsynaptic cell membrane. It localises to the cytoplasm. The protein localises to the cytoskeleton. Postsynaptic protein required for clustering of nicotinic acetylcholine receptors (nAChRs) at the neuromuscular junction. It may link the receptor to the underlying postsynaptic cytoskeleton, possibly by direct association with actin or spectrin. This chain is 43 kDa receptor-associated protein of the synapse (RAPSN), found in Homo sapiens (Human).